The following is a 301-amino-acid chain: 4-hydroxy-tetrahydrodipicolinate synthase (301 aa).

Thr53 provides a ligand contact to pyruvate. Tyr142 serves as the catalytic Proton donor/acceptor. Lys170 acts as the Schiff-base intermediate with substrate in catalysis. Val212 contacts pyruvate.

Belongs to the DapA family. As to quaternary structure, homotetramer; dimer of dimers.

The protein localises to the cytoplasm. It catalyses the reaction L-aspartate 4-semialdehyde + pyruvate = (2S,4S)-4-hydroxy-2,3,4,5-tetrahydrodipicolinate + H2O + H(+). It participates in amino-acid biosynthesis; L-lysine biosynthesis via DAP pathway; (S)-tetrahydrodipicolinate from L-aspartate: step 3/4. Catalyzes the condensation of (S)-aspartate-beta-semialdehyde [(S)-ASA] and pyruvate to 4-hydroxy-tetrahydrodipicolinate (HTPA). The protein is 4-hydroxy-tetrahydrodipicolinate synthase of Synechocystis sp. (strain ATCC 27184 / PCC 6803 / Kazusa).